Consider the following 333-residue polypeptide: Mitochondrial glycine transporter (333 aa).

The disordered stretch occupies residues 1 to 25; sequence MTNAATDKSVASVARDVSTGKPGKS. Solcar repeat units follow at residues 26–109, 127–220, and 236–319; these read PDAA…MRAA, LLPM…FKND, and RSSV…LIKS. 6 helical membrane-spanning segments follow: residues 32 to 57, 84 to 110, 133 to 158, 195 to 218, 240 to 266, and 294 to 312; these read LLSGGLAGLTSAVTLQPFDLLKTRLQ, GAVPSALRTSVGAGLYFTTLSKMRAAV, LATGFVARAIVGYITMPITMVKTRFE, GSVATLARDCPYAGLYVLFYEGFK, INSSSAILAASVSTTITAPFDAIKTRL, and GLSLRFGRKALSAGISWCI.

It belongs to the mitochondrial carrier (TC 2.A.29) family. SLC25A38 subfamily.

The protein localises to the mitochondrion inner membrane. It catalyses the reaction glycine(in) = glycine(out). Its function is as follows. Mitochondrial glycine transporter that imports glycine into the mitochondrial matrix. Plays an important role in providing glycine for the first enzymatic step in heme biosynthesis, the condensation of glycine with succinyl-CoA to produce 5-aminolevulinate (ALA) in the mitochondrial matrix. The protein is Mitochondrial glycine transporter of Scheffersomyces stipitis (strain ATCC 58785 / CBS 6054 / NBRC 10063 / NRRL Y-11545) (Yeast).